The sequence spans 245 residues: 2-C-methyl-D-erythritol 4-phosphate cytidylyltransferase (245 aa).

Belongs to the IspD/TarI cytidylyltransferase family. IspD subfamily.

The enzyme catalyses 2-C-methyl-D-erythritol 4-phosphate + CTP + H(+) = 4-CDP-2-C-methyl-D-erythritol + diphosphate. It functions in the pathway isoprenoid biosynthesis; isopentenyl diphosphate biosynthesis via DXP pathway; isopentenyl diphosphate from 1-deoxy-D-xylulose 5-phosphate: step 2/6. Catalyzes the formation of 4-diphosphocytidyl-2-C-methyl-D-erythritol from CTP and 2-C-methyl-D-erythritol 4-phosphate (MEP). The polypeptide is 2-C-methyl-D-erythritol 4-phosphate cytidylyltransferase (Chloroherpeton thalassium (strain ATCC 35110 / GB-78)).